A 248-amino-acid polypeptide reads, in one-letter code: Ribonuclease 3 (248 aa).

The RNase III domain occupies 15 to 142 (LKAFFKQYHV…MIAALYLDLG (128 aa)). Glu55 serves as a coordination point for Mg(2+). Asp59 is an active-site residue. Residues Asp128 and Glu131 each contribute to the Mg(2+) site. The active site involves Glu131. Residues 169-240 (DYKTELQEFL…ARDALQKLAT (72 aa)) form the DRBM domain.

It belongs to the ribonuclease III family. In terms of assembly, homodimer. The cofactor is Mg(2+).

The protein localises to the cytoplasm. The enzyme catalyses Endonucleolytic cleavage to 5'-phosphomonoester.. Functionally, digests double-stranded RNA. Involved in the processing of primary rRNA transcript to yield the immediate precursors to the large and small rRNAs (23S and 16S). Processes some mRNAs, and tRNAs when they are encoded in the rRNA operon. Processes pre-crRNA and tracrRNA of type II CRISPR loci if present in the organism. The chain is Ribonuclease 3 from Spiroplasma citri.